Here is a 215-residue protein sequence, read N- to C-terminus: Cytochrome b6 (215 aa).

Residues isoleucine 32–phenylalanine 52 traverse the membrane as a helical segment. Cysteine 35 contributes to the heme c binding site. Heme b is bound by residues histidine 86 and histidine 100. Transmembrane regions (helical) follow at residues alanine 90–phenylalanine 110, leucine 116–tyrosine 136, and leucine 186–isoleucine 206. The heme b site is built by histidine 187 and histidine 202.

It belongs to the cytochrome b family. PetB subfamily. In terms of assembly, the 4 large subunits of the cytochrome b6-f complex are cytochrome b6, subunit IV (17 kDa polypeptide, PetD), cytochrome f and the Rieske protein, while the 4 small subunits are PetG, PetL, PetM and PetN. The complex functions as a dimer. Heme b is required as a cofactor. Requires heme c as cofactor.

The protein resides in the plastid. It localises to the chloroplast thylakoid membrane. In terms of biological role, component of the cytochrome b6-f complex, which mediates electron transfer between photosystem II (PSII) and photosystem I (PSI), cyclic electron flow around PSI, and state transitions. This is Cytochrome b6 from Spirogyra maxima (Green alga).